A 266-amino-acid chain; its full sequence is ATP synthase subunit a (266 aa).

5 helical membrane passes run 33 to 53 (FWTL…LFLA), 95 to 115 (VIAP…LMDL), 141 to 161 (DVNI…FYSI), 206 to 226 (LFGN…LLPW), and 237 to 257 (AIFH…LTIV).

The protein belongs to the ATPase A chain family. As to quaternary structure, F-type ATPases have 2 components, CF(1) - the catalytic core - and CF(0) - the membrane proton channel. CF(1) has five subunits: alpha(3), beta(3), gamma(1), delta(1), epsilon(1). CF(0) has three main subunits: a(1), b(2) and c(9-12). The alpha and beta chains form an alternating ring which encloses part of the gamma chain. CF(1) is attached to CF(0) by a central stalk formed by the gamma and epsilon chains, while a peripheral stalk is formed by the delta and b chains.

The protein localises to the cell inner membrane. Its function is as follows. Key component of the proton channel; it plays a direct role in the translocation of protons across the membrane. The polypeptide is ATP synthase subunit a (Klebsiella pneumoniae subsp. pneumoniae (strain ATCC 700721 / MGH 78578)).